We begin with the raw amino-acid sequence, 367 residues long: Regulator of fusion ref-1 (367 aa).

Over residues 1-10 (MVLISTPPPA) the composition is skewed to pro residues. Positions 1–24 (MVLISTPPPAYAHNRKTSQEKKRR) are disordered. Positions 11-24 (YAHNRKTSQEKKRR) are basic motif 1. The bHLH 1 domain maps to 11–63 (YAHNRKTSQEKKRRDEINAKIKELQLLIQNESDNEKMTQGDVLNRAVEVVSRM). A helix-loop-helix motif 1 region spans residues 25–63 (DEINAKIKELQLLIQNESDNEKMTQGDVLNRAVEVVSRM). 2 disordered regions span residues 133 to 177 (RSES…RRDR) and 313 to 367 (ATSP…RPWE). Low complexity predominate over residues 141 to 157 (SSMSYRSQSSSPSTSES). A compositionally biased stretch (basic and acidic residues) spans 161–177 (IDRKEVKKNREQDRRDR). Residues 162–175 (DRKEVKKNREQDRR) are basic motif 2. In terms of domain architecture, bHLH 2 spans 162–219 (DRKEVKKNREQDRRDRQGEAFDALKNFIIENKLMTSHQVEKMQRLNTLDIIIAYIQNK). The tract at residues 176 to 219 (DRQGEAFDALKNFIIENKLMTSHQVEKMQRLNTLDIIIAYIQNK) is helix-loop-helix motif 2. The span at 313–354 (ATSPKSQQSPSYSLDSPPPSSDTSSSSIETPSTPNENSNSNP) shows a compositional bias: low complexity. Residues 356 to 367 (ASRKSKLFRPWE) are compositionally biased toward basic residues.

Interacts with unc-37.

It localises to the nucleus. Functionally, probable transcription factor. Binds 5'-TGCCACGTGTCCA-3' in vitro, probably via the E-box motif 5'-CA[TC][AG]TG-3'. Acts in embryonic development in a Notch-dependent manner, perhaps as a direct target of transcriptional regulator lag-1 in the Notch signaling pathway. Also acts in embryonic development in a Notch-independent manner. Plays a role in both Notch-dependent and -independent pathways in the execution of neuronal lineage decisions in the embryo. Also involved in regulating cell fate leading to formation of neuronal structures known as postdeirids. Involved in the pattern of cell fusion with a large syncytium known as hyp-7, during larval development, in hermaphrodites. Plays a role in regulating the activity of homeobox protein mab-5 in Pn.p cells. In Caenorhabditis elegans, this protein is Regulator of fusion ref-1.